The sequence spans 393 residues: MDVCHTDPAELSSGEAKELQQIKWHRKQLLEDIQKLKDEIADVFAQIDCFESTEESRMAQKEKEMCIGRKKFNMDPNKGIQYLIEHKLLTSDVQDIAQFLYKGDGLNKTAIGTYLGEKDPINLQVLQAFVDCHEFANLNLVQALRQFLWSFRLPGEAQKIDRMMEAFAARYCLCNPGVFRSTDTCYVLSFSVIMLNTGLHNPNVRDRPPFERFVTMNRGINSGSDLPEEQLRNLFDSIKSEPFSIPEDDGGDLTHTFFNPDREGWLLKLGGRVKTWKRRWFILTDNCLYYFEFTTDKEPRGIIPLENLSVQKVEDPKKPFCLELYNPSCRGQKIKACKTDGDGKVVEGKHESYRISAANAEERDQWIEAIRASITRVPFYDLLSARKKKIVGK.

Residues 13–56 (SGEAKELQQIKWHRKQLLEDIQKLKDEIADVFAQIDCFESTEES) adopt a coiled-coil conformation. Residues 54-241 (EESRMAQKEK…RNLFDSIKSE (188 aa)) enclose the SEC7 domain. The region spanning 259-375 (NPDREGWLLK…WIEAIRASIT (117 aa)) is the PH domain. A 1,2-diacyl-sn-glycero-3-phospho-(1D-myo-inositol-3,4,5-trisphosphate) contacts are provided by residues 268–275 (KLGGRVKT), Arg279, Tyr290, and Arg300. The segment at 386 to 393 (RKKKIVGK) is C-terminal autoinhibitory region.

Its subcellular location is the cell membrane. Functionally, promotes guanine-nucleotide exchange on ARF1 and ARF5. Promotes the activation of ARF factors through replacement of GDP with GTP. This Mus musculus (Mouse) protein is Cytohesin-4 (Cyth4).